The sequence spans 877 residues: Lipophilic envelope-spanning tunnel protein B (877 aa).

Topologically, residues 1 to 19 are cytoplasmic; the sequence is MSQETPASTTEAQIKNKRR. A helical transmembrane segment spans residues 20-40; that stretch reads ISPFWLLPFIALMIASWLIWD. Residues 41 to 877 lie on the Periplasmic side of the membrane; that stretch reads SYQDRGNTVT…WREWGTALPK (837 aa). 7 MCE/MlaD regions span residues 46–149, 160–272, 279–382, 391–499, 515–625, 634–737, and 746–862; these read GNTV…VALD, DLMI…GLYE, RGVI…VVPG, DVLT…PLYA, TTVS…ILYA, GGQI…LQEA, and DGLS…LLQE.

This sequence belongs to the PqiB family. In terms of assembly, homohexamer. May interact with LetA in the inner membrane. May also interact with partners in the outer membrane.

The protein localises to the cell inner membrane. Functionally, forms a tunnel that spans the entire periplasmic space. Is probably involved in the transport of lipids between the inner membrane and the outer membrane through the tunnel. Forms a dynamic tunnel sufficiently long to mediate lipid transport directly between the two membranes without the need for a shuttle protein. Binds phospholipids. Lipids bind inside the tunnel. Required for outer membrane homeostasis. Contributes to membrane integrity. In Escherichia coli (strain K12), this protein is Lipophilic envelope-spanning tunnel protein B.